A 400-amino-acid polypeptide reads, in one-letter code: Sensor histidine kinase LnrJ (400 aa).

At 1-2 the chain is on the extracellular side; the sequence is MK. The helical transmembrane segment at 3–23 threads the bilayer; that stretch reads ALFFTRMFTLMVSCLMYLSIV. At 24–27 the chain is on the cytoplasmic side; it reads KEDN. A helical membrane pass occupies residues 28–48; sequence WFGYVFIAAGAAMYAANHVLL. Residues 49–61 lie on the Extracellular side of the membrane; that stretch reads TKETNAIWFCLID. Residues 62-82 form a helical membrane-spanning segment; it reads IAIGFSFGFIFPGTGLFIIML. The Cytoplasmic portion of the chain corresponds to 83–101; sequence CPVAVAFFLRGFPKRTAWS. The chain crosses the membrane as a helical span at residues 102-122; sequence VLCLSSILFLTVLIRTYAMFG. Residues 123-125 lie on the Extracellular side of the membrane; the sequence is NEF. Residues 126-146 traverse the membrane as a helical segment; that stretch reads VIDHLTSMTFVVFCGVVGKLI. Over 147–400 the chain is Cytoplasmic; sequence RKLLDAQDTA…GPVQQKESLS (254 aa). The 196-residue stretch at 190 to 385 folds into the Histidine kinase domain; sequence IYERNRMARE…TVNAEFSLAN (196 aa). A Phosphohistidine; by autocatalysis modification is found at H201.

In terms of processing, autophosphorylated.

The protein localises to the cell membrane. It catalyses the reaction ATP + protein L-histidine = ADP + protein N-phospho-L-histidine.. Its function is as follows. Required for resistance to linearmycins, a family of antibiotic-specialized metabolites produced by some streptomycetes. Member of the two-component regulatory system LnrJ/LnrK, which induces expression of the LnrLMN ABC transporter in response to linearmycins and other polyenes. Acts as a specific sensor for linearmycin, either directly through binding or indirectly through membrane perturbation. Probably activates LnrK by phosphorylation. May also promote biofilm formation. In Bacillus subtilis (strain 168), this protein is Sensor histidine kinase LnrJ.